The sequence spans 426 residues: Probable glucose-6-phosphate isomerase (426 aa).

Glu272 (proton donor) is an active-site residue. Active-site residues include His293 and Lys404.

This sequence belongs to the GPI family.

The protein localises to the cytoplasm. The enzyme catalyses alpha-D-glucose 6-phosphate = beta-D-fructose 6-phosphate. The protein operates within carbohydrate biosynthesis; gluconeogenesis. It functions in the pathway carbohydrate degradation; glycolysis; D-glyceraldehyde 3-phosphate and glycerone phosphate from D-glucose: step 2/4. Functionally, catalyzes the reversible isomerization of glucose-6-phosphate to fructose-6-phosphate. This chain is Probable glucose-6-phosphate isomerase, found in Halobacterium salinarum (strain ATCC 700922 / JCM 11081 / NRC-1) (Halobacterium halobium).